The following is a 344-amino-acid chain: L-sulfolactate dehydrogenase (344 aa).

This sequence belongs to the LDH2/MDH2 oxidoreductase family.

It localises to the cytoplasm. The catalysed reaction is a (2S)-2-hydroxycarboxylate + NAD(+) = a 2-oxocarboxylate + NADH + H(+). The protein operates within cofactor biosynthesis; coenzyme M biosynthesis; sulfoacetaldehyde from phosphoenolpyruvate and sulfite: step 3/4. Its pathway is cofactor biosynthesis; 5,6,7,8-tetrahydromethanopterin biosynthesis. Functionally, catalyzes the reduction of sulfopyruvate to (R)-sulfolactate much more efficiently than the reverse reaction. Also catalyzes the reduction of oxaloacetate, alpha-ketoglutarate, and to a much lower extent, KHTCA, but not pyruvate. Involved in the biosynthesis of both coenzyme M (with (R)-sulfolactate) and methanopterin (with alpha-ketoglutarate). This is L-sulfolactate dehydrogenase (comC) from Methanocaldococcus jannaschii (strain ATCC 43067 / DSM 2661 / JAL-1 / JCM 10045 / NBRC 100440) (Methanococcus jannaschii).